The following is a 201-amino-acid chain: Large ribosomal subunit protein uL4 (201 aa).

The tract at residues 44–71 is disordered; sequence RAQKTRAEVTGSGKKPWRQKGTGRARSG.

Belongs to the universal ribosomal protein uL4 family. Part of the 50S ribosomal subunit.

Its function is as follows. One of the primary rRNA binding proteins, this protein initially binds near the 5'-end of the 23S rRNA. It is important during the early stages of 50S assembly. It makes multiple contacts with different domains of the 23S rRNA in the assembled 50S subunit and ribosome. Functionally, forms part of the polypeptide exit tunnel. The polypeptide is Large ribosomal subunit protein uL4 (Escherichia fergusonii (strain ATCC 35469 / DSM 13698 / CCUG 18766 / IAM 14443 / JCM 21226 / LMG 7866 / NBRC 102419 / NCTC 12128 / CDC 0568-73)).